The chain runs to 182 residues: Adenine phosphoribosyltransferase (182 aa).

The protein belongs to the purine/pyrimidine phosphoribosyltransferase family. In terms of assembly, homodimer.

It localises to the cytoplasm. The catalysed reaction is AMP + diphosphate = 5-phospho-alpha-D-ribose 1-diphosphate + adenine. It functions in the pathway purine metabolism; AMP biosynthesis via salvage pathway; AMP from adenine: step 1/1. In terms of biological role, catalyzes a salvage reaction resulting in the formation of AMP, that is energically less costly than de novo synthesis. The polypeptide is Adenine phosphoribosyltransferase (Stutzerimonas stutzeri (strain A1501) (Pseudomonas stutzeri)).